Reading from the N-terminus, the 98-residue chain is Small ribosomal subunit protein eS24 (98 aa).

A disordered region spans residues 76–98 (GRQRTERSYLLNRGEPKKEEEEA). Basic and acidic residues predominate over residues 89 to 98 (GEPKKEEEEA).

Belongs to the eukaryotic ribosomal protein eS24 family.

This chain is Small ribosomal subunit protein eS24, found in Methanosphaerula palustris (strain ATCC BAA-1556 / DSM 19958 / E1-9c).